We begin with the raw amino-acid sequence, 338 residues long: Oligopeptide transport ATP-binding protein OppD (338 aa).

Residues 7-257 enclose the ABC transporter domain; sequence LEAKQVSVAF…PKHPYTRSLL (251 aa). An ATP-binding site is contributed by 43–50; it reads GESGSGKS.

It belongs to the ABC transporter superfamily. The complex is composed of two ATP-binding proteins (OppD and OppF), two transmembrane proteins (OppB and OppC) and a solute-binding protein (OppA).

The protein localises to the cell membrane. It catalyses the reaction a [peptide](out) + ATP + H2O = a [peptide](in) + ADP + phosphate + H(+). Functionally, part of the ABC transporter complex OppABCDF involved in the uptake of oligopeptides. Probably responsible for energy coupling to the transport system. Essential for uptake of peptides larger than three amino acids and for growth in milk. This Lactococcus lactis subsp. lactis (strain IL1403) (Streptococcus lactis) protein is Oligopeptide transport ATP-binding protein OppD (oppD).